We begin with the raw amino-acid sequence, 460 residues long: DNA repair protein RAD57 (460 aa).

Position 125–132 (Gly-125–Ser-132) interacts with ATP.

Belongs to the RecA family.

The protein localises to the nucleus. Its function is as follows. Participates in the repair of X-ray-induced damage to DNA and in meiosis. It may act in part by stabilizing a repair complex of other RAD genes. In Saccharomyces cerevisiae (strain ATCC 204508 / S288c) (Baker's yeast), this protein is DNA repair protein RAD57 (RAD57).